The chain runs to 280 residues: uncharacterized protein (280 aa).

The N-terminal stretch at 1 to 26 is a signal peptide; it reads MNILIKSAVKNFIVFSTALYTSFSFA.

This sequence to E.coli YibQ.

This is an uncharacterized protein from Haemophilus influenzae (strain ATCC 51907 / DSM 11121 / KW20 / Rd).